A 445-amino-acid polypeptide reads, in one-letter code: Protein kinase C and casein kinase substrate in neurons protein 1 (445 aa).

Residues 12–282 (DETTDSFWEV…TIVSASAQED (271 aa)) enclose the F-BAR domain. Coiled coils occupy residues 146-167 (AKKL…KEEK) and 183-219 (TTDQ…NKCT). The tract at residues 327–390 (LTQVTHGAEH…PFEEDSKGVR (64 aa)) is disordered. 2 stretches are compositionally biased toward polar residues: residues 338-358 (TPQT…QYSA) and 368-379 (TAAQSASETNGG). Positions 386-445 (SKGVRVRALYDYEGQEQDELTFKAGDELTKLEDEDEQGWCKGRLDSGQLGLYPANYVEPV) constitute an SH3 domain.

Interacts with cobl.

Its subcellular location is the cytoplasm. The protein resides in the cytosol. The protein localises to the cell membrane. It localises to the cell projection. It is found in the synapse. Its subcellular location is the synaptosome. The protein resides in the cytoplasmic vesicle membrane. The protein localises to the ruffle membrane. It localises to the membrane. In terms of biological role, binds to membranes via its F-BAR domain and mediates membrane tubulation. Plays a role in cellular transport processes by recruiting dynamins to membranes. Plays a role in the reorganization of the actin cytoskeleton and in neuron morphogenesis via its interaction with cobl, and by recruiting cobl to the cell cortex. Plays a role in the regulation of neurite formation, neurite branching and the regulation of neurite length. Required for normal synaptic vesicle endocytosis; this process retrieves previously released neurotransmitters to accommodate multiple cycles of neurotransmission. Required for normal excitatory and inhibitory synaptic transmission. Required for normal embryonic development, including normal development of laterality, normal body size and shape, as well as normal brain and heart development. Required for normal development of stereocilia and kinocilia in sensory hair cells of neuromasts in the posterior lateral line organ, and thus also for balance keeping and normal swimming behavior. In Danio rerio (Zebrafish), this protein is Protein kinase C and casein kinase substrate in neurons protein 1 (pacsin1b).